The sequence spans 520 residues: MSSAPDLALTARLVQLLQTGNIFTTILSIFGIALSAVAAWGIATCVYNLYFHPLASYPGPFLWRASSLPWKIALLKGTMHHDLMRFHETYGPELRLKPDELSYANAQAWKDIHAHVPGRPEFLKDPIRLPLAPNGVMSILVSDTKNHARFRSLFGHAFSDKGLRTQQKTINTYADQFMEVLKEVADNGKSVEMVNYYNMAVFDTIGALAFGESFNSMRDRKIHPWVDAIHKNLKSVAISHVMRSMGIEPLTPYILPKELRGARANNYSYAIAKINNRMQKTGEQGDFWDRVIVKSGAEGEMNDGSGMSKGEMLNNAAVMVVGGSETSASALCGATYLLAQSPDKMKKAVGEIRGKFKSSDEITLHSVTNMEYLTAVIDETLRMYPSVPGQPPRVVPKGGATVCGKFVPEETRVGVSHIGTYFASYNFTRSHEFIPERHIDKSLFPDDNYAAYQPWSVGVRNCIGKNLAYAELRLILAKTLWHYDITLDREKTGDFLDQKIWSIWAKRELWMKISLAENAK.

The helical transmembrane segment at 22–42 (IFTTILSIFGIALSAVAAWGI) threads the bilayer. N-linked (GlcNAc...) asparagine glycans are attached at residues asparagine 266 and asparagine 426. Heme is bound at residue cysteine 462.

Belongs to the cytochrome P450 family. The cofactor is heme.

It is found in the membrane. It carries out the reaction versicolorin B + NADPH + O2 + H(+) = versicolorin A + NADP(+) + 2 H2O. Its pathway is mycotoxin biosynthesis. In terms of biological role, versicolorin B desaturase; part of the fragmented gene cluster that mediates the biosynthesis of dothistromin (DOTH), a polyketide toxin very similar in structure to the aflatoxin precursor, versicolorin B. The first step of the pathway is the conversion of acetate to norsolorinic acid (NOR) and requires the fatty acid synthase subunits hexA and hexB, as well as the polyketide synthase pksA. PksA combines a hexanoyl starter unit and 7 malonyl-CoA extender units to synthesize the precursor NOR. The hexanoyl starter unit is provided to the acyl-carrier protein (ACP) domain by the fungal fatty acid synthase hexA/hexB. The second step is the conversion of NOR to averantin (AVN) and requires the norsolorinic acid ketoreductase nor1, which catalyzes the dehydration of norsolorinic acid to form (1'S)-averantin. The cytochrome P450 monooxygenase avnA then catalyzes the hydroxylation of AVN to 5'hydroxyaverantin (HAVN). The next step is performed by adhA that transforms HAVN to averufin (AVF). Averufin might then be converted to hydroxyversicolorone by cypX and avfA. Hydroxyversicolorone is further converted versiconal hemiacetal acetate (VHA) by moxY. VHA is then the substrate for the versiconal hemiacetal acetate esterase est1 to yield versiconal (VAL). Versicolorin B synthase vbsA then converts VAL to versicolorin B (VERB) by closing the bisfuran ring. Then, the activity of the versicolorin B desaturase verB leads to versicolorin A (VERA). DotB, a predicted chloroperoxidase, may perform epoxidation of the A-ring of VERA. Alternatively, a cytochrome P450, such as cypX or avnA could catalyze this step. It is also possible that another, uncharacterized, cytochrome P450 enzyme is responsible for this step. Opening of the epoxide could potentially be achieved by the epoxide hydrolase epoA. However, epoA seems not to be required for DOTH biosynthesis, but other epoxide hydrolases may have the ability to complement this hydrolysis. Alternatively, opening of the epoxide ring could be achieved non-enzymatically. The next step is the deoxygenation of ring A to yield the 5,8-dihydroxyanthraquinone which is most likely catalyzed by the NADPH dehydrogenase encoded by ver1. The last stages of DOTH biosynthesis are proposed to involve hydroxylation of the bisfuran. OrdB and norB might have oxidative roles here. An alternative possibility is that cytochrome P450 monoogenases such as avnA and cypX might perform these steps in addition to previously proposed steps. This Dothistroma septosporum (strain NZE10 / CBS 128990) (Red band needle blight fungus) protein is Versicolorin B desaturase.